The primary structure comprises 355 residues: Peptide chain release factor 1 (355 aa).

N5-methylglutamine is present on Gln-231. Over residues 280 to 291 (SERLAKESEARK) the composition is skewed to basic and acidic residues. Positions 280 to 303 (SERLAKESEARKSQVGSGDRSERI) are disordered.

This sequence belongs to the prokaryotic/mitochondrial release factor family. In terms of processing, methylated by PrmC. Methylation increases the termination efficiency of RF1.

It localises to the cytoplasm. Its function is as follows. Peptide chain release factor 1 directs the termination of translation in response to the peptide chain termination codons UAG and UAA. This chain is Peptide chain release factor 1, found in Campylobacter jejuni subsp. jejuni serotype O:6 (strain 81116 / NCTC 11828).